The chain runs to 751 residues: Fusarisetin A cluster transcription factor fsa6 (751 aa).

The tract at residues 1 to 35 is disordered; sequence MADQAQDVRPTEWGPGKTPQGRARLPSSRPREKPQ. Positions 38–66 form a DNA-binding region, zn(2)-C6 fungal-type; the sequence is CNLCRRRKLRCDRQRPCSSCAQRELGLSC. Residues 107-116 are compositionally biased toward polar residues; that stretch reads NVNAQDQVGA. The interval 107–153 is disordered; sequence NVNAQDQVGATPSPRGQPRGPDYPTPAAVHAPSTNEEPVSAAVSPAD.

It localises to the nucleus. In terms of biological role, transcription factor that regulates the expression of the gene cluster that mediates the biosynthesis of fusarisetin A. In Fusarium sp. (strain FN080326), this protein is Fusarisetin A cluster transcription factor fsa6.